Here is a 309-residue protein sequence, read N- to C-terminus: Aspartate carbamoyltransferase catalytic subunit (309 aa).

Carbamoyl phosphate-binding residues include Arg54 and Thr55. Lys82 lines the L-aspartate pocket. Carbamoyl phosphate contacts are provided by Arg104, His132, and Gln135. 2 residues coordinate L-aspartate: Arg165 and Arg219. Carbamoyl phosphate-binding residues include Gly260 and Pro261.

It belongs to the aspartate/ornithine carbamoyltransferase superfamily. ATCase family. As to quaternary structure, heterododecamer (2C3:3R2) of six catalytic PyrB chains organized as two trimers (C3), and six regulatory PyrI chains organized as three dimers (R2).

It catalyses the reaction carbamoyl phosphate + L-aspartate = N-carbamoyl-L-aspartate + phosphate + H(+). It functions in the pathway pyrimidine metabolism; UMP biosynthesis via de novo pathway; (S)-dihydroorotate from bicarbonate: step 2/3. Functionally, catalyzes the condensation of carbamoyl phosphate and aspartate to form carbamoyl aspartate and inorganic phosphate, the committed step in the de novo pyrimidine nucleotide biosynthesis pathway. This Parafrankia sp. (strain EAN1pec) protein is Aspartate carbamoyltransferase catalytic subunit.